The primary structure comprises 287 residues: Small ribosomal subunit protein uS10m (287 aa).

Residues methionine 1 to leucine 33 constitute a mitochondrion transit peptide. Positions leucine 33–leucine 43 are enriched in polar residues. The disordered stretch occupies residues leucine 33 to valine 84. The segment covering proline 63–threonine 73 has biased composition (basic and acidic residues). Over residues lysine 74 to valine 84 the composition is skewed to polar residues.

The protein belongs to the universal ribosomal protein uS10 family. In terms of assembly, part of the mitochondrial small ribosomal subunit.

It is found in the mitochondrion. Functionally, involved in mitochondrial genome encoded proteins translation. Involved in the binding of tRNA to the ribosomes. The polypeptide is Small ribosomal subunit protein uS10m (rsm10) (Emericella nidulans (strain FGSC A4 / ATCC 38163 / CBS 112.46 / NRRL 194 / M139) (Aspergillus nidulans)).